The sequence spans 245 residues: 1-(5-phosphoribosyl)-5-[(5-phosphoribosylamino)methylideneamino] imidazole-4-carboxamide isomerase (245 aa).

The Proton acceptor role is filled by aspartate 8. Aspartate 130 functions as the Proton donor in the catalytic mechanism.

This sequence belongs to the HisA/HisF family.

Its subcellular location is the cytoplasm. The catalysed reaction is 1-(5-phospho-beta-D-ribosyl)-5-[(5-phospho-beta-D-ribosylamino)methylideneamino]imidazole-4-carboxamide = 5-[(5-phospho-1-deoxy-D-ribulos-1-ylimino)methylamino]-1-(5-phospho-beta-D-ribosyl)imidazole-4-carboxamide. Its pathway is amino-acid biosynthesis; L-histidine biosynthesis; L-histidine from 5-phospho-alpha-D-ribose 1-diphosphate: step 4/9. The polypeptide is 1-(5-phosphoribosyl)-5-[(5-phosphoribosylamino)methylideneamino] imidazole-4-carboxamide isomerase (Pseudomonas aeruginosa (strain LESB58)).